The chain runs to 1644 residues: Terminal uridylyltransferase 4 (1644 aa).

3 disordered regions span residues 31–63, 96–168, and 205–257; these read NQTLKARNDKSVKEIENSSPNRNSSKKNKQNDI, CKAK…SLLL, and ALQN…EMDY. Residues 36–46 show a composition bias toward basic and acidic residues; it reads ARNDKSVKEIE. S104 carries the phosphoserine modification. Positions 112–125 are enriched in polar residues; sequence TISQAKSEKATSLQ. Phosphoserine is present on residues S134 and S156. Residues 206–222 are compositionally biased toward polar residues; the sequence is LQNSPRSQKQQTCTDNT. The segment covering 238–252 has biased composition (basic and acidic residues); sequence DLSKMKNDESNKENS. Residues 253 to 333 form a required for interaction with LIN28A and pre-let-7 RNA region; it reads SEMDYLENAT…KEKRHKKNIL (81 aa). Zn(2+) is bound by residues C306, C309, H322, and H328. The disordered stretch occupies residues 579-617; it reads EKNSIAEENKAKADQPKDDTKKTETDNQSNAMKEKHGKS. Over residues 582-603 the composition is skewed to basic and acidic residues; sequence SIAEENKAKADQPKDDTKKTET. The PAP-associated 1 domain occupies 628 to 678; that stretch reads SLGQLWLELLKFYTLDFALEEYVICVRIQDILTRENKNWPKRRIAIEDPFS. A disordered region spans residues 794–816; that stretch reads GQDSSSLSTSKSSEIEPKLDKKQ. Positions 806-816 are enriched in basic and acidic residues; that stretch reads SEIEPKLDKKQ. Residues 901–1634 are sufficient for monouridylation activity; the sequence is DKFILTSGKP…CATRRCRERC (734 aa). Residues 913–930 form a CCHC-type 1 zinc finger; that stretch reads IVCSICKKDGHSKNDCPE. UTP contacts are provided by residues 998–1001, 1008–1011, N1081, K1103, 1121–1125, and H1237; these read SSKN, SDLD, and SYAYI. Mg(2+) is bound by residues D1009 and D1011. Residues 1184-1237 form the PAP-associated 2 domain; it reads SLGELWLGLLRFYTEEFDFKEYVISIRQKKLLTTFEKQWTSKCIAIEDPFDLNH. The CCHC-type 2 zinc finger occupies 1293-1310; the sequence is RCCRVCGKIGHYMKDCPK. Residues 1321 to 1348 are disordered; sequence KDSEEEKEGNEEEKDSRDVLDPRDLHDT. A compositionally biased stretch (basic and acidic residues) spans 1334–1348; the sequence is KDSRDVLDPRDLHDT. The CCHC-type 3 zinc-finger motif lies at 1357–1374; the sequence is LRCFICGDAGHVRRECPE. Positions 1401 to 1426 are enriched in low complexity; the sequence is AGSAQQQGDQSIRTRQSSECSESPSY. The tract at residues 1401–1482 is disordered; sequence AGSAQQQGDQ…LYNFPQSPPA (82 aa). A compositionally biased stretch (polar residues) spans 1441–1452; sequence AAITQPSSQPGS. The segment covering 1453–1470 has biased composition (low complexity); that stretch reads QPKLGPPQQGAQPPHQVQ. The residue at position 1624 (R1624) is an Omega-N-methylarginine.

It belongs to the DNA polymerase type-B-like family. In terms of assembly, interacts with LIN28A in the presence of pre-let-7 RNA. Interacts with T2BP. Interacts with MOV10; the interaction is RNA-dependent. Mg(2+) is required as a cofactor. The cofactor is Mn(2+).

It is found in the nucleus. It localises to the cytoplasm. The protein resides in the cytoplasmic ribonucleoprotein granule. It carries out the reaction RNA(n) + UTP = RNA(n)-3'-uridine ribonucleotide + diphosphate. Its function is as follows. Uridylyltransferase that mediates the terminal uridylation of mRNAs with short (less than 25 nucleotides) poly(A) tails, hence facilitating global mRNA decay. Essential for both oocyte maturation and fertility. Through 3' terminal uridylation of mRNA, sculpts, with TUT7, the maternal transcriptome by eliminating transcripts during oocyte growth. Involved in microRNA (miRNA)-induced gene silencing through uridylation of deadenylated miRNA targets. Also functions as an integral regulator of microRNA biogenesis using 3 different uridylation mechanisms. Acts as a suppressor of miRNA biogenesis by mediating the terminal uridylation of some miRNA precursors, including that of let-7 (pre-let-7), miR107, miR-143 and miR-200c. Uridylated miRNAs are not processed by Dicer and undergo degradation. Degradation of pre-let-7 contributes to the maintenance of embryonic stem (ES) cell pluripotency. Also catalyzes the 3' uridylation of miR-26A, a miRNA that targets IL6 transcript. This abrogates the silencing of IL6 transcript, hence promoting cytokine expression. In the absence of LIN28A, TUT7 and TUT4 monouridylate group II pre-miRNAs, which includes most of pre-let7 members, that shapes an optimal 3' end overhang for efficient processing. Adds oligo-U tails to truncated pre-miRNAS with a 5' overhang which may promote rapid degradation of non-functional pre-miRNA species. May also suppress Toll-like receptor-induced NF-kappa-B activation via binding to T2BP. Does not play a role in replication-dependent histone mRNA degradation. Due to functional redundancy between TUT4 and TUT7, the identification of the specific role of each of these proteins is difficult. TUT4 and TUT7 restrict retrotransposition of long interspersed element-1 (LINE-1) in cooperation with MOV10 counteracting the RNA chaperonne activity of L1RE1. TUT7 uridylates LINE-1 mRNAs in the cytoplasm which inhibits initiation of reverse transcription once in the nucleus, whereas uridylation by TUT4 destabilizes mRNAs in cytoplasmic ribonucleoprotein granules. This chain is Terminal uridylyltransferase 4, found in Homo sapiens (Human).